Consider the following 25-residue polypeptide: Caerin-1.2 (25 aa).

Position 25 is a leucine amide (L25).

As to expression, expressed by the skin parotoid and/or rostral glands.

Its subcellular location is the secreted. Functionally, antibacterial peptide, that adopts an alpha helical conformation which can disrupt bacterial membranes. Each caerin displays a different antimicrobial specificity. This Ranoidea caerulea (Green tree frog) protein is Caerin-1.2.